Here is a 492-residue protein sequence, read N- to C-terminus: Mitochondrial distribution and morphology protein 12 (492 aa).

In terms of domain architecture, SMP-LTD spans 1–492 (MSIDLNWETV…VYPSFWTFLV (492 aa)). Disordered regions lie at residues 68 to 158 (DFYE…STPG), 199 to 301 (LEGH…GHPR), and 379 to 434 (AVGG…GSGN). Acidic residues predominate over residues 78–90 (VASDDSEGEEDAV). A compositionally biased stretch (gly residues) spans 130 to 139 (SPGGPGGPGM). Positions 246-257 (LNPNSLAPPSSS) are enriched in low complexity. A compositionally biased stretch (polar residues) spans 270–285 (TTPAPGSATALSGSNE). Over residues 387–400 (GLSSPGEGPSQAQG) the composition is skewed to low complexity. Positions 401-415 (QGQGQGQGQGQGQTP) are enriched in gly residues. A compositionally biased stretch (low complexity) spans 416–428 (GAGQQKQQKKQAG).

Belongs to the MDM12 family. Component of the ER-mitochondria encounter structure (ERMES) or MDM complex, composed of MMM1, MDM10, MDM12 and MDM34. An MMM1 homodimer associates with one molecule of MDM12 on each side in a pairwise head-to-tail manner, and the SMP-LTD domains of MMM1 and MDM12 generate a continuous hydrophobic tunnel for phospholipid trafficking.

Its subcellular location is the mitochondrion outer membrane. It localises to the endoplasmic reticulum membrane. Its function is as follows. Component of the ERMES/MDM complex, which serves as a molecular tether to connect the endoplasmic reticulum (ER) and mitochondria. Components of this complex are involved in the control of mitochondrial shape and protein biogenesis, and function in nonvesicular lipid trafficking between the ER and mitochondria. MDM12 is required for the interaction of the ER-resident membrane protein MMM1 and the outer mitochondrial membrane-resident beta-barrel protein MDM10. The MDM12-MMM1 subcomplex functions in the major beta-barrel assembly pathway that is responsible for biogenesis of all mitochondrial outer membrane beta-barrel proteins, and acts in a late step after the SAM complex. The MDM10-MDM12-MMM1 subcomplex further acts in the TOM40-specific pathway after the action of the MDM12-MMM1 complex. Essential for establishing and maintaining the structure of mitochondria and maintenance of mtDNA nucleoids. In Chaetomium globosum (strain ATCC 6205 / CBS 148.51 / DSM 1962 / NBRC 6347 / NRRL 1970) (Soil fungus), this protein is Mitochondrial distribution and morphology protein 12.